Reading from the N-terminus, the 660-residue chain is MKTVVFAYHDMGCLGIEALLAAGYEISAIFTHTDNPGEKAFYGSVAHLAAERGIPVYAPDNVNHPLWVERIAQLSPEVIFSFYYRHLICDEILQLAPAGAFNLHGSLLPKYRGRAPLNWVLVNGETETGVTLHRMVKRADAGAIVAQLRVAIAPDDIAITLHHKLCHATRQLLEQTLPAIKHGNILEIAQRENEATCFGRRTPDDSFLEWHKPASVLHNMVRAVADPWPGAFSYVGNQKFTVWSSRVHPHASKAQPGSVISIAPLLIACGDGALEIVTGQAGDGITMQGSQLAQTLGLVQGSRLNSQPACTARRRTRVLILGVNGFIGNHLTERLLREDHYEVYGLDIGSDAISRFLNHPHFHFVEGDISIHSEWIEYHVKKCDVVLPLVAIATPIEYTRNPLRVFELDFEENLRIIRYCVKYRKRIIFPSTSEVYGMCSDKYFDEDHSNLIVGPVNKPRWIYSVSKQLLDRVIWAYGEKEGLQFTLFRPFNWMGPRLDNLNAARIGSSRAITQLILNLVEGSPIKLIDGGKQKRCFTDIRDGIEALYRIIENAGNRCDGEIINIGNPENEASIEELGEMLLASFEKHPLRHHFPPFAGFRVVESSSYYGKGYQDVEHRKPSIRNAHRCLDWEPKIDMQETIDETLDFFLRTVDLTDKPS.

The formyltransferase ArnAFT stretch occupies residues 1-304 (MKTVVFAYHD…TLGLVQGSRL (304 aa)). 86–88 (HLI) serves as a coordination point for (6R)-10-formyltetrahydrofolate. His104 (proton donor; for formyltransferase activity) is an active-site residue. (6R)-10-formyltetrahydrofolate-binding positions include Arg114 and 136–140 (VKRAD). The dehydrogenase ArnADH stretch occupies residues 314–660 (RRTRVLILGV…RTVDLTDKPS (347 aa)). NAD(+) is bound by residues Asp347 and 368 to 369 (DI). Residues Ala393, Tyr398, and 432–433 (TS) each bind UDP-alpha-D-glucuronate. Glu434 acts as the Proton acceptor; for decarboxylase activity in catalysis. UDP-alpha-D-glucuronate contacts are provided by residues Arg460, Asn492, 526-535 (KLIDGGKQKR), and Tyr613. Arg619 functions as the Proton donor; for decarboxylase activity in the catalytic mechanism.

In the N-terminal section; belongs to the Fmt family. UDP-L-Ara4N formyltransferase subfamily. This sequence in the C-terminal section; belongs to the NAD(P)-dependent epimerase/dehydratase family. UDP-glucuronic acid decarboxylase subfamily. In terms of assembly, homohexamer, formed by a dimer of trimers.

It carries out the reaction UDP-alpha-D-glucuronate + NAD(+) = UDP-beta-L-threo-pentopyranos-4-ulose + CO2 + NADH. The catalysed reaction is UDP-4-amino-4-deoxy-beta-L-arabinose + (6R)-10-formyltetrahydrofolate = UDP-4-deoxy-4-formamido-beta-L-arabinose + (6S)-5,6,7,8-tetrahydrofolate + H(+). It functions in the pathway nucleotide-sugar biosynthesis; UDP-4-deoxy-4-formamido-beta-L-arabinose biosynthesis; UDP-4-deoxy-4-formamido-beta-L-arabinose from UDP-alpha-D-glucuronate: step 1/3. It participates in nucleotide-sugar biosynthesis; UDP-4-deoxy-4-formamido-beta-L-arabinose biosynthesis; UDP-4-deoxy-4-formamido-beta-L-arabinose from UDP-alpha-D-glucuronate: step 3/3. Its pathway is bacterial outer membrane biogenesis; lipopolysaccharide biosynthesis. Functionally, bifunctional enzyme that catalyzes the oxidative decarboxylation of UDP-glucuronic acid (UDP-GlcUA) to UDP-4-keto-arabinose (UDP-Ara4O) and the addition of a formyl group to UDP-4-amino-4-deoxy-L-arabinose (UDP-L-Ara4N) to form UDP-L-4-formamido-arabinose (UDP-L-Ara4FN). The modified arabinose is attached to lipid A and is required for resistance to polymyxin and cationic antimicrobial peptides. This Shigella boydii serotype 4 (strain Sb227) protein is Bifunctional polymyxin resistance protein ArnA.